The following is a 395-amino-acid chain: Flap endonuclease 1 (395 aa).

The segment at 1–104 (MGIKHLYQII…GELAKRIARK (104 aa)) is N-domain. Mg(2+) is bound at residue Asp-34. DNA contacts are provided by Arg-47 and Arg-70. Asp-86 contacts Mg(2+). The tract at residues 103–123 (RKQEAAEQHEEAKETGTTEDV) is disordered. The tract at residues 122–253 (DVEKFSRRTV…NTALKLIRDH (132 aa)) is I-domain. Glu-158, Glu-160, Asp-179, and Asp-181 together coordinate Mg(2+). DNA is bound at residue Glu-158. DNA is bound by residues Gly-231 and Asp-233. Asp-233 provides a ligand contact to Mg(2+). The tract at residues 341–349 (QQSRLEGFF) is interaction with PCNA. Residues 356–389 (DEEKASLKRKHEEKLEAAKKKKKEDAKAKREAKS) show a composition bias toward basic and acidic residues. The segment at 356–395 (DEEKASLKRKHEEKLEAAKKKKKEDAKAKREAKSRPKGTA) is disordered.

This sequence belongs to the XPG/RAD2 endonuclease family. FEN1 subfamily. In terms of assembly, interacts with PCNA. Three molecules of FEN1 bind to one PCNA trimer with each molecule binding to one PCNA monomer. PCNA stimulates the nuclease activity without altering cleavage specificity. It depends on Mg(2+) as a cofactor. Post-translationally, phosphorylated. Phosphorylation upon DNA damage induces relocalization to the nuclear plasma.

It is found in the nucleus. The protein resides in the nucleolus. It localises to the nucleoplasm. The protein localises to the mitochondrion. In terms of biological role, structure-specific nuclease with 5'-flap endonuclease and 5'-3' exonuclease activities involved in DNA replication and repair. During DNA replication, cleaves the 5'-overhanging flap structure that is generated by displacement synthesis when DNA polymerase encounters the 5'-end of a downstream Okazaki fragment. It enters the flap from the 5'-end and then tracks to cleave the flap base, leaving a nick for ligation. Also involved in the long patch base excision repair (LP-BER) pathway, by cleaving within the apurinic/apyrimidinic (AP) site-terminated flap. Acts as a genome stabilization factor that prevents flaps from equilibrating into structures that lead to duplications and deletions. Also possesses 5'-3' exonuclease activity on nicked or gapped double-stranded DNA, and exhibits RNase H activity. Also involved in replication and repair of rDNA and in repairing mitochondrial DNA. The protein is Flap endonuclease 1 of Uncinocarpus reesii (strain UAMH 1704).